The following is a 152-amino-acid chain: Deoxyuridine 5'-triphosphate nucleotidohydrolase (152 aa).

Substrate contacts are provided by residues 71-73 (RSG), Asn-84, 88-90 (LID), and Met-98.

It belongs to the dUTPase family. Requires Mg(2+) as cofactor.

The catalysed reaction is dUTP + H2O = dUMP + diphosphate + H(+). It participates in pyrimidine metabolism; dUMP biosynthesis; dUMP from dCTP (dUTP route): step 2/2. Its function is as follows. This enzyme is involved in nucleotide metabolism: it produces dUMP, the immediate precursor of thymidine nucleotides and it decreases the intracellular concentration of dUTP so that uracil cannot be incorporated into DNA. The protein is Deoxyuridine 5'-triphosphate nucleotidohydrolase of Shewanella piezotolerans (strain WP3 / JCM 13877).